Reading from the N-terminus, the 92-residue chain is Bombyxin A-1 (92 aa).

Residues 1-19 (MKILLAIALMLSTVMWVST) form the signal peptide. Gln-20 is modified (pyrrolidone carboxylic acid). 3 cysteine pairs are disulfide-bonded: Cys-29–Cys-79, Cys-41–Cys-92, and Cys-78–Cys-83. Residues 50 to 70 (SGAQFASYGSAWLMPYSEGRG) constitute a propeptide, c peptide like.

This sequence belongs to the insulin family. In terms of assembly, heterodimer of a B chain and an A chain linked by two disulfide bonds.

It is found in the secreted. In terms of biological role, brain peptide responsible for activation of prothoracic glands to produce ecdysone in insects. The sequence is that of Bombyxin A-1 (BBXA1) from Bombyx mori (Silk moth).